Reading from the N-terminus, the 58-residue chain is Large ribosomal subunit protein bL32 (58 aa).

The protein belongs to the bacterial ribosomal protein bL32 family.

This is Large ribosomal subunit protein bL32 from Anaplasma phagocytophilum (strain HZ).